The chain runs to 273 residues: Protein BRANCHLESS TRICHOME (273 aa).

Polar residues predominate over residues 1–12 (MKDMKMQSSPET). The interval 1-30 (MKDMKMQSSPETMMTRIPTPDPHSTGVRED) is disordered. Positions 69-199 (IKVFMESELG…GERERNRMMK (131 aa)) form a coiled coil.

Interacts with STI.

Functionally, acts as a key regulator of trichome branching. Could participate with STI in the same pathway. Also plays a role in integrating endoreplication levels with cell shape. The sequence is that of Protein BRANCHLESS TRICHOME (BLT) from Arabidopsis thaliana (Mouse-ear cress).